Reading from the N-terminus, the 345-residue chain is Transcription factor 19 (345 aa).

Positions 31 to 88 (YRLGHRADLCDVALRPQQEPGLISGIHAELHAEPRGDDWRVSLEDHSSQGTLVNNVRL) constitute an FHA domain. The residue at position 78 (Ser-78) is a Phosphoserine. Residues 190–227 (LTFSPSWGGPKSLPVPAPPGEMGTTPSAPPQRNRRKSV) form a disordered region. Residues 293–342 (AAPCCCLPQEETVAWVQCDGCDVWFHVACVGCSIQAAREADFRCPGCRAG) form a PHD-type zinc finger. The Zn(2+) site is built by Cys-296, Cys-298, Cys-310, Cys-313, His-318, Cys-321, Cys-336, and Cys-339.

It is found in the nucleus. Potential transcription factor that may play a role in the regulation of genes involved in cell cycle G1/S transition. May bind to regulatory elements of genes, including the promoter of the transcription factor FOXO1. This is Transcription factor 19 (TCF19) from Homo sapiens (Human).